Reading from the N-terminus, the 364-residue chain is tRNA 2-selenouridine synthase (364 aa).

The Rhodanese domain occupies 14-137 (LIADTPIIDV…LRQTTIQATI (124 aa)). Residue cysteine 97 is the S-selanylcysteine intermediate of the active site.

It belongs to the SelU family. As to quaternary structure, monomer.

The catalysed reaction is 5-methylaminomethyl-2-thiouridine(34) in tRNA + selenophosphate + (2E)-geranyl diphosphate + H2O + H(+) = 5-methylaminomethyl-2-selenouridine(34) in tRNA + (2E)-thiogeraniol + phosphate + diphosphate. The enzyme catalyses 5-methylaminomethyl-2-thiouridine(34) in tRNA + (2E)-geranyl diphosphate = 5-methylaminomethyl-S-(2E)-geranyl-thiouridine(34) in tRNA + diphosphate. It carries out the reaction 5-methylaminomethyl-S-(2E)-geranyl-thiouridine(34) in tRNA + selenophosphate + H(+) = 5-methylaminomethyl-2-(Se-phospho)selenouridine(34) in tRNA + (2E)-thiogeraniol. It catalyses the reaction 5-methylaminomethyl-2-(Se-phospho)selenouridine(34) in tRNA + H2O = 5-methylaminomethyl-2-selenouridine(34) in tRNA + phosphate. Its function is as follows. Involved in the post-transcriptional modification of the uridine at the wobble position (U34) of tRNA(Lys), tRNA(Glu) and tRNA(Gln). Catalyzes the conversion of 2-thiouridine (S2U-RNA) to 2-selenouridine (Se2U-RNA). Acts in a two-step process involving geranylation of 2-thiouridine (S2U) to S-geranyl-2-thiouridine (geS2U) and subsequent selenation of the latter derivative to 2-selenouridine (Se2U) in the tRNA chain. This Escherichia coli (strain 55989 / EAEC) protein is tRNA 2-selenouridine synthase.